Consider the following 79-residue polypeptide: MDTIENLIIAIVKPLISQPDALTIKIEDTPEFLEYHLNLDQSDVGRVIGRKGRTISAIRTIVYSVPTEYKKVRIVIDEK.

Residues Phe-32 to Lys-79 form the KH domain.

The protein belongs to the KhpA RNA-binding protein family. Forms a complex with KhpB. KhpA and KhpB colocalize throughout the cell cycle, with some increase at midcell in dividing cells.

It localises to the cytoplasm. A probable RNA chaperone. Forms a complex with KhpB which presumably binds to about 170 cellular RNAs (mRNA, tRNA intergenic RNA and sRNAs); the proteins alone each bind the same set of RNAs. A mutation in this gene suppresses the requirement for PBP2b (penA, a transpeptidase) in peripheral peptidoglycan (PG) synthesis. Probably plays a role in PG homeostasis and regulating peripheral PG synthesis. The sequence is that of RNA-binding protein KhpA from Streptococcus pneumoniae serotype 2 (strain D39 / NCTC 7466).